Consider the following 104-residue polypeptide: L-rhamnose mutarotase (104 aa).

Tyr18 contacts substrate. The Proton donor role is filled by His22. Substrate-binding positions include Tyr41 and 76–77 (WW).

This sequence belongs to the rhamnose mutarotase family. In terms of assembly, homodimer.

It localises to the cytoplasm. The catalysed reaction is alpha-L-rhamnose = beta-L-rhamnose. It functions in the pathway carbohydrate metabolism; L-rhamnose metabolism. Its function is as follows. Involved in the anomeric conversion of L-rhamnose. The polypeptide is L-rhamnose mutarotase (Salmonella agona (strain SL483)).